Consider the following 270-residue polypeptide: Orotidine 5'-phosphate decarboxylase (270 aa).

Catalysis depends on K89, which acts as the Proton donor.

It belongs to the OMP decarboxylase family. Type 2 subfamily.

It catalyses the reaction orotidine 5'-phosphate + H(+) = UMP + CO2. Its pathway is pyrimidine metabolism; UMP biosynthesis via de novo pathway; UMP from orotate: step 2/2. This is Orotidine 5'-phosphate decarboxylase from Dehalococcoides mccartyi (strain ATCC BAA-2100 / JCM 16839 / KCTC 5957 / BAV1).